We begin with the raw amino-acid sequence, 712 residues long: Secretin OutD (712 aa).

The N-terminal stretch at 1-27 is a signal peptide; that stretch reads MLGKGIKKSWGWLGLTVLLLGSPCGWA. The N0 stretch occupies residues 28 to 124; sequence AEFSASFKGT…LANNEQPGVG (97 aa). Residues 126–190 form an N1 region; the sequence is ELVTRVVPLN…DIVNTVDKTG (65 aa). Residues 191–264 are N2; it reads DREMITVSLN…MIRQLDRKQV (74 aa). Residues 267–394 are N3; it reads GGTKVIYLKY…DLEQVINQLD (128 aa). A disordered region spans residues 288–342; that stretch reads GNGTSGNRNSSSTNSSRPSSTRSSSTLNNSNSSSSGSSSGSGSSSSSSSSSMGFG. Residues 399–651 are secretin; the sequence is QVLVEAIIAE…LFLRPTIIRD (253 aa). Residues 653 to 712 form a s domain region; it reads QQYQQASISKYNSFNNEQQQQRGQGNSVLDNNTLRLSGGNTYTFRQVQSSISAFYQPEGR.

This sequence belongs to the bacterial secretin family. GSP D subfamily. Forms a cylindrical channel with 15 subunits.

It is found in the cell outer membrane. Involved in a type II secretion system (T2SS, formerly general secretion pathway, GSP) for the export of proteins. Required for the translocation of the multiple pectic enzymes. This subunit forms the outer membrane channel. This Dickeya chrysanthemi (Pectobacterium chrysanthemi) protein is Secretin OutD (outD).